Reading from the N-terminus, the 389-residue chain is Large envelope protein (389 aa).

2 stretches are compositionally biased toward polar residues: residues 1 to 10 and 85 to 95; these read MGQNLSTSNP and STNRQTGRQPT. 2 disordered regions span residues 1–54 and 73–106; these read MGQN…AFGL and ILHT…DTHP. A lipid anchor (N-myristoyl glycine; by host) is attached at glycine 2. The tract at residues 2–108 is pre-S1; sequence GQNLSTSNPL…PPLRDTHPQA (107 aa). The segment at 2–163 is pre-S; sequence GQNLSTSNPL…FSRIGDPVTN (162 aa). The Virion surface; in external conformation portion of the chain corresponds to 2–170; it reads GQNLSTSNPL…VTNMENITSG (169 aa). Over 2 to 242 the chain is Intravirion; in internal conformation; that stretch reads GQNLSTSNPL…PGYRWMCLRG (241 aa). The interval 109–163 is pre-S2; sequence VQWNSTTFHQTLQDPRVRGLYFPAGGSSSGTVNPVPTTASPLSSIFSRIGDPVTN. The chain crosses the membrane as a helical span at residues 171–191; that stretch reads FLGPLLVLQAGFFLLTRILTI. Residues 192–242 are Intravirion; in external conformation-facing; it reads PQSLDSWWTSLNFRGGTTVCLGQNSQSPTSNHSPTSCPPTCPGYRWMCLRG. The chain crosses the membrane as a helical span at residues 243 to 263; that stretch reads FIIFLFILLLCLIFLLVLLEY. At 264–337 the chain is on the virion surface side; sequence QGMLHVCPLI…WASVRFSWLS (74 aa). Residue asparagine 309 is glycosylated (N-linked (GlcNAc...) asparagine; by host). The helical transmembrane segment at 338–358 threads the bilayer; the sequence is LLVPFVQWFVGLSPTVWLSAI. The Intravirion segment spans residues 359–364; the sequence is WMMWYW. A helical membrane pass occupies residues 365 to 387; it reads GPSLYSILSPFLPLLPIFFCLWV. Topologically, residues 388–389 are virion surface; it reads YI.

It belongs to the orthohepadnavirus major surface antigen family. In terms of assembly, li-HBsAg interacts with capsid protein and with HDV Large delta antigen. Isoform M associates with host chaperone CANX through its pre-S2 N glycan. This association may be essential for M proper secretion. Post-translationally, isoform M is N-terminally acetylated by host at a ratio of 90%, and N-glycosylated by host at the pre-S2 region. Myristoylated.

Its subcellular location is the virion membrane. In terms of biological role, the large envelope protein exists in two topological conformations, one which is termed 'external' or Le-HBsAg and the other 'internal' or Li-HBsAg. In its external conformation the protein attaches the virus to cell receptors and thereby initiating infection. This interaction determines the species specificity and liver tropism. This attachment induces virion internalization predominantly through caveolin-mediated endocytosis. The large envelope protein also assures fusion between virion membrane and endosomal membrane. In its internal conformation the protein plays a role in virion morphogenesis and mediates the contact with the nucleocapsid like a matrix protein. Its function is as follows. The middle envelope protein plays an important role in the budding of the virion. It is involved in the induction of budding in a nucleocapsid independent way. In this process the majority of envelope proteins bud to form subviral lipoprotein particles of 22 nm of diameter that do not contain a nucleocapsid. In Homo sapiens (Human), this protein is Large envelope protein.